A 568-amino-acid polypeptide reads, in one-letter code: Phosphoribosylaminoimidazole carboxylase (568 aa).

The 189-residue stretch at 110-298 folds into the ATP-grasp domain; sequence KNHLIKHDVA…QFEAHVRAVT (189 aa). 138–193 serves as a coordination point for ATP; the sequence is GEKFGYPYMLKSRTLAYDGRGNFVVKDKSYCEKALEFLKDRPLYAEKWCPFTKELA.

This sequence in the C-terminal section; belongs to the AIR carboxylase family. Class I subfamily.

The catalysed reaction is 5-amino-1-(5-phospho-D-ribosyl)imidazole-4-carboxylate + H(+) = 5-amino-1-(5-phospho-beta-D-ribosyl)imidazole + CO2. It functions in the pathway purine metabolism; IMP biosynthesis via de novo pathway; 5-amino-1-(5-phospho-D-ribosyl)imidazole-4-carboxylate from 5-amino-1-(5-phospho-D-ribosyl)imidazole (carboxylase route): step 1/1. In Candida albicans (strain SC5314 / ATCC MYA-2876) (Yeast), this protein is Phosphoribosylaminoimidazole carboxylase (ADE2).